The primary structure comprises 401 residues: Sulfate adenylyltransferase (401 aa).

It belongs to the sulfate adenylyltransferase family.

The catalysed reaction is sulfate + ATP + H(+) = adenosine 5'-phosphosulfate + diphosphate. Its pathway is sulfur metabolism; hydrogen sulfide biosynthesis; sulfite from sulfate: step 1/3. In Alcanivorax borkumensis (strain ATCC 700651 / DSM 11573 / NCIMB 13689 / SK2), this protein is Sulfate adenylyltransferase.